The primary structure comprises 329 residues: DNA-directed RNA polymerase subunit alpha (329 aa).

Residues 1–231 (MQTNLLKPKT…EQLAVFAQLE (231 aa)) are alpha N-terminal domain (alpha-NTD). The segment at 249–329 (FDPILLRPVD…SWPPAGLDKR (81 aa)) is alpha C-terminal domain (alpha-CTD).

It belongs to the RNA polymerase alpha chain family. As to quaternary structure, homodimer. The RNAP catalytic core consists of 2 alpha, 1 beta, 1 beta' and 1 omega subunit. When a sigma factor is associated with the core the holoenzyme is formed, which can initiate transcription.

It catalyses the reaction RNA(n) + a ribonucleoside 5'-triphosphate = RNA(n+1) + diphosphate. Its function is as follows. DNA-dependent RNA polymerase catalyzes the transcription of DNA into RNA using the four ribonucleoside triphosphates as substrates. This chain is DNA-directed RNA polymerase subunit alpha, found in Polaromonas sp. (strain JS666 / ATCC BAA-500).